We begin with the raw amino-acid sequence, 490 residues long: Metalloreductase STEAP2 (490 aa).

NADP(+) is bound by residues 38-41, 60-61, 93-100, Asn118, and Ala151; these read SGDF, SR, and IHREHYTS. Trp152 and Asp160 together coordinate FAD. A helical transmembrane segment spans residues 208–228; sequence LFTLWRGPVVVAISLATFFFL. Tyr229 contributes to the Fe(3+) binding site. The chain crosses the membrane as a helical span at residues 259–279; it reads LPIVAITLLSLVYLAGLLAAA. Positions 259 to 407 constitute a Ferric oxidoreductase domain; the sequence is LPIVAITLLS…LGYVALLIST (149 aa). The FAD site is built by Gln281 and Arg302. 4 consecutive transmembrane segments (helical) span residues 305 to 325, 359 to 379, 393 to 413, and 432 to 452; these read LGLL…CLPM, MYIS…VTSI, FIQS…VLIY, and FVLA…LFLP. His316 provides a ligand contact to heme b. Tyr319 serves as a coordination point for Fe(3+). Residues Ser378 and Gln395 each contribute to the FAD site. His409 is a binding site for heme b. Phosphoserine is present on Ser483.

This sequence belongs to the STEAP family. Requires FAD as cofactor. The cofactor is heme b. In terms of tissue distribution, expressed at high levels in prostate and at significantly lower levels in heart, brain, kidney, pancreas, and ovary.

It localises to the endosome membrane. The protein localises to the cell membrane. The catalysed reaction is 2 Fe(2+) + NADP(+) + H(+) = 2 Fe(3+) + NADPH. It carries out the reaction 2 Cu(+) + NADP(+) + H(+) = 2 Cu(2+) + NADPH. Functionally, integral membrane protein that functions as a NADPH-dependent ferric-chelate reductase, using NADPH from one side of the membrane to reduce a Fe(3+) chelate that is bound on the other side of the membrane. Mediates sequential transmembrane electron transfer from NADPH to FAD and onto heme, and finally to the Fe(3+) chelate. Can also reduce Cu(2+) to Cu(1+). The sequence is that of Metalloreductase STEAP2 (STEAP2) from Homo sapiens (Human).